The chain runs to 372 residues: 4-hydroxy-3-methylbut-2-en-1-yl diphosphate synthase (flavodoxin) (372 aa).

[4Fe-4S] cluster contacts are provided by Cys270, Cys273, Cys305, and Glu312.

It belongs to the IspG family. [4Fe-4S] cluster is required as a cofactor.

The enzyme catalyses (2E)-4-hydroxy-3-methylbut-2-enyl diphosphate + oxidized [flavodoxin] + H2O + 2 H(+) = 2-C-methyl-D-erythritol 2,4-cyclic diphosphate + reduced [flavodoxin]. Its pathway is isoprenoid biosynthesis; isopentenyl diphosphate biosynthesis via DXP pathway; isopentenyl diphosphate from 1-deoxy-D-xylulose 5-phosphate: step 5/6. In terms of biological role, converts 2C-methyl-D-erythritol 2,4-cyclodiphosphate (ME-2,4cPP) into 1-hydroxy-2-methyl-2-(E)-butenyl 4-diphosphate. The chain is 4-hydroxy-3-methylbut-2-en-1-yl diphosphate synthase (flavodoxin) from Shigella dysenteriae serotype 1 (strain Sd197).